The following is a 499-amino-acid chain: Alpha-L-arabinofuranosidase B (499 aa).

An N-terminal signal peptide occupies residues 1-18 (MFSRRNLVALGLAATVSA). Residues asparagine 83 and asparagine 202 are each glycosylated (N-linked (GlcNAc...) asparagine).

It belongs to the glycosyl hydrolase 54 family.

It carries out the reaction Hydrolysis of terminal non-reducing alpha-L-arabinofuranoside residues in alpha-L-arabinosides.. Its pathway is glycan metabolism; L-arabinan degradation. Able to hydrolyze 1,5-, 1,3- and 1,2-alpha-linkages not only in L-arabinofuranosyl oligosaccharides, but also in polysac-charides containing terminal non-reducing L-arabinofuranoses in side chains, like L-arabinan, arabinogalactan and arabinoxylan. In Aspergillus niger, this protein is Alpha-L-arabinofuranosidase B (abfB).